The following is a 310-amino-acid chain: MFKTEPFIEESIEEIRKQIDNRRTIIALSGGVDSSVAAVLADRAIGDKLLAVYVDTGLMRKNESEEIWKIFKEQMGLNLKIVEAKDIFLKELEGVIDPEEKRKIIGRLFIEVFEKVAEEQGEEVLVQGTIAPDWIESEGQIKTHHNIALPGGMVLDVVEPLRELYKDEVRLLAEALGLPDQIAHRQPFPGPGLAVRILGEITDEKLAICKEANFIVSEEIEKTELKNELWQYFAAVLDTKATGVKGDIRDYNWVVALRFVSSLDAMTAHTPEIPFDLIKRISKRITSEIPNVTRVVLDVTDKPPATIEFE.

The GMPS ATP-PPase domain occupies 2–185; the sequence is FKTEPFIEES…LGLPDQIAHR (184 aa). Position 29–35 (29–35) interacts with ATP; that stretch reads SGGVDSS.

Heterodimer composed of a glutamine amidotransferase subunit (A) and a GMP-binding subunit (B).

It catalyses the reaction XMP + L-glutamine + ATP + H2O = GMP + L-glutamate + AMP + diphosphate + 2 H(+). Its pathway is purine metabolism; GMP biosynthesis; GMP from XMP (L-Gln route): step 1/1. Catalyzes the synthesis of GMP from XMP. The polypeptide is GMP synthase [glutamine-hydrolyzing] subunit B (Methanococcus maripaludis (strain C7 / ATCC BAA-1331)).